Consider the following 258-residue polypeptide: Tryptophan synthase alpha chain (258 aa).

Catalysis depends on proton acceptor residues Glu47 and Asp58.

The protein belongs to the TrpA family. Tetramer of two alpha and two beta chains.

It carries out the reaction (1S,2R)-1-C-(indol-3-yl)glycerol 3-phosphate + L-serine = D-glyceraldehyde 3-phosphate + L-tryptophan + H2O. It functions in the pathway amino-acid biosynthesis; L-tryptophan biosynthesis; L-tryptophan from chorismate: step 5/5. Its function is as follows. The alpha subunit is responsible for the aldol cleavage of indoleglycerol phosphate to indole and glyceraldehyde 3-phosphate. This Bacillus cereus (strain B4264) protein is Tryptophan synthase alpha chain.